A 247-amino-acid polypeptide reads, in one-letter code: HTH-type transcriptional regulator SarU (247 aa).

2 consecutive DNA-binding regions (H-T-H motif) follow at residues 53 to 76 and 178 to 201; these read LKEI…SLSK and LKDL…RLNN.

This sequence belongs to the SarA family.

Its subcellular location is the cytoplasm. Functionally, positive regulator of RNAII and RNAIII in a cell density-dependent manner. It can contribute to the expression of virulence genes controlled by agr. May also regulate target genes via an agr-independent pathway. The chain is HTH-type transcriptional regulator SarU (sarU) from Staphylococcus aureus (strain NCTC 8325 / PS 47).